The sequence spans 414 residues: Carboxynorspermidine synthase (414 aa).

Belongs to the saccharopine dehydrogenase family. Carboxynorspermidine synthase subfamily. In terms of assembly, homodimer.

It catalyses the reaction carboxynorspermidine + NADP(+) + H2O = L-aspartate 4-semialdehyde + propane-1,3-diamine + NADPH + H(+). It carries out the reaction carboxyspermidine + NADP(+) + H2O = L-aspartate 4-semialdehyde + putrescine + NADPH + H(+). With respect to regulation, activated by dithiothreitol and inhibited by SH-reactive compounds. In terms of biological role, involved in norspermidine biosynthesis. Catalyzes the synthesis of carboxynorspermidine from L-aspartate 4-semialdehyde and 1,3-diaminopropane. Is also slightly active with putrescine as a substrate. The polypeptide is Carboxynorspermidine synthase (Vibrio alginolyticus (strain ATCC 17749 / DSM 2171 / NBRC 15630 / NCIMB 1903 / NCTC 12160 / XII-53)).